The sequence spans 75 residues: Large ribosomal subunit protein bL31c (75 aa).

The protein belongs to the bacterial ribosomal protein bL31 family. Type A subfamily. Part of the 50S ribosomal subunit.

The protein localises to the plastid. It localises to the chloroplast. Its function is as follows. Binds the 23S rRNA. This Cyanidium caldarium (Red alga) protein is Large ribosomal subunit protein bL31c.